A 339-amino-acid polypeptide reads, in one-letter code: UDP-N-acetylenolpyruvoylglucosamine reductase (339 aa).

The region spanning 19–189 is the FAD-binding PCMH-type domain; that stretch reads VDVRAQLFAE…LRVRFALNRV (171 aa). R166 is an active-site residue. The active-site Proton donor is S239. Residue E335 is part of the active site.

This sequence belongs to the MurB family. FAD is required as a cofactor.

It is found in the cytoplasm. The catalysed reaction is UDP-N-acetyl-alpha-D-muramate + NADP(+) = UDP-N-acetyl-3-O-(1-carboxyvinyl)-alpha-D-glucosamine + NADPH + H(+). It participates in cell wall biogenesis; peptidoglycan biosynthesis. Its function is as follows. Cell wall formation. This chain is UDP-N-acetylenolpyruvoylglucosamine reductase, found in Pseudomonas fluorescens (strain Pf0-1).